We begin with the raw amino-acid sequence, 520 residues long: Peptide chain release factor 3 (520 aa).

One can recognise a tr-type G domain in the interval 8–277 (ESRKTFAIIS…HAPMPNARQT (270 aa)). Residues 17–24 (SHPDAGKT), 85–89 (DTPGH), and 139–142 (NKLD) contribute to the GTP site.

Belongs to the TRAFAC class translation factor GTPase superfamily. Classic translation factor GTPase family. PrfC subfamily.

The protein localises to the cytoplasm. In terms of biological role, increases the formation of ribosomal termination complexes and stimulates activities of RF-1 and RF-2. It binds guanine nucleotides and has strong preference for UGA stop codons. It may interact directly with the ribosome. The stimulation of RF-1 and RF-2 is significantly reduced by GTP and GDP, but not by GMP. In Staphylococcus haemolyticus (strain JCSC1435), this protein is Peptide chain release factor 3.